Here is a 188-residue protein sequence, read N- to C-terminus: Movement protein (188 aa).

Belongs to the tombusvirus/aureusvirus movement protein p22 family. As to quaternary structure, interacts with host protein HFI22. Phosphorylated.

The protein localises to the host membrane. Transports viral genome to neighboring plant cells directly through plasmosdesmata, without any budding. The movement protein allows efficient cell to cell propagation, by bypassing the host cell wall barrier. The sequence is that of Movement protein from Capsicum annuum (Capsicum pepper).